The following is a 268-amino-acid chain: MERYENLFAQLKDRKEGAFVPFVTLGDPSVEQSLNIIDTLIEAGADALELGIPFSDPLADGPTIQEATLRAFAAGVTPTQCFEMLALIRQKHPTIPIGLLMYANLVFSKGIDEFYAQCEKVGVDSVLVADVPVEESAPFRQAALRYNVAPIFICPPNADDDLLRQIASYGRGYTYLLSRAGVTGAENRAALPLHHLVEKLQEYNAAPPLQGFGISSPEQVTGAIEAGAAGAISGSAIVKLIEKNVANPGQMLTELKAFVTAMKAATRA.

Residues Glu-49 and Asp-60 each act as proton acceptor in the active site.

Belongs to the TrpA family. As to quaternary structure, tetramer of two alpha and two beta chains.

The enzyme catalyses (1S,2R)-1-C-(indol-3-yl)glycerol 3-phosphate + L-serine = D-glyceraldehyde 3-phosphate + L-tryptophan + H2O. It functions in the pathway amino-acid biosynthesis; L-tryptophan biosynthesis; L-tryptophan from chorismate: step 5/5. Its function is as follows. The alpha subunit is responsible for the aldol cleavage of indoleglycerol phosphate to indole and glyceraldehyde 3-phosphate. This is Tryptophan synthase alpha chain from Citrobacter koseri (strain ATCC BAA-895 / CDC 4225-83 / SGSC4696).